Here is a 199-residue protein sequence, read N- to C-terminus: Recombination protein RecR (199 aa).

The C4-type zinc finger occupies 57 to 72; sequence CQACRTFTEETLCPIC. Residues 81–176 form the Toprim domain; it reads EVICVVETPA…SVSRIAHGVP (96 aa).

Belongs to the RecR family.

May play a role in DNA repair. It seems to be involved in an RecBC-independent recombinational process of DNA repair. It may act with RecF and RecO. The protein is Recombination protein RecR of Shewanella woodyi (strain ATCC 51908 / MS32).